The primary structure comprises 97 residues: Late embryogenesis abundant protein Lea5 (97 aa).

It belongs to the LEA type 3 family.

The protein is Late embryogenesis abundant protein Lea5 (LEA5) of Citrus sinensis (Sweet orange).